Here is a 162-residue protein sequence, read N- to C-terminus: Sorting nexin-3 (162 aa).

The residue at position 2 (A2) is an N-acetylalanine. The PX domain maps to 27–151 (NFLEIDVSNP…HMFLQDEIID (125 aa)). R43 is subject to Omega-N-methylarginine. A 1,2-diacyl-sn-glycero-3-phospho-(1D-myo-inositol-3-phosphate) contacts are provided by R70, S72, K95, and R118. Position 72 is a phosphoserine (S72). Residue K95 forms a Glycyl lysine isopeptide (Lys-Gly) (interchain with G-Cter in SUMO2) linkage. The tract at residues 147 to 162 (DEIIDKSYTPSKIRHA) is binds predominantly to PtdIns(P5) and weaker to PtdIns(P3) abd PtdIns(P4); involved in neurite outgrowth regulation.

Belongs to the sorting nexin family. Interacts with VPS26A, VPS29 and VPS35; the interaction with VPS35 is direct. The association with the retromer CSC subcomplex subunits is proposed to represent a functional distinct retromer variant described as SNX3-retromer complex. Interacts with USP10 and SCNN1A. Interacts with TRFC. Interacts with SNX8; 2 molecules of SNX8 seems to associate with one molecule of SNX3. Interacts with PTPRU. Interacts with MON2 and DOP1B. Post-translationally, ubiquitinated, leading to its proteasomal degradation. Deubiquitinated by USP10.

It localises to the early endosome. Its subcellular location is the cytoplasmic vesicle. The protein resides in the phagosome. Functionally, phosphoinositide-binding protein required for multivesicular body formation. Specifically binds phosphatidylinositol 3-phosphate (PtdIns(P3)). Can also bind phosphatidylinositol 4-phosphate (PtdIns(P4)), phosphatidylinositol 5-phosphate (PtdIns(P5)) and phosphatidylinositol 3,5-biphosphate (PtdIns(3,5)P2). Plays a role in protein transport between cellular compartments. Together with RAB7A facilitates endosome membrane association of the retromer cargo-selective subcomplex (CSC/VPS). May in part act as component of the SNX3-retromer complex which mediates the retrograde endosome-to-TGN transport of WLS distinct from the SNX-BAR retromer pathway. Promotes stability and cell surface expression of epithelial sodium channel (ENAC) subunits SCNN1A and SCNN1G. Not involved in EGFR degradation. Involved in the regulation of phagocytosis in dendritic cells possibly by regulating EEA1 recruitment to the nascent phagosomes. Involved in iron homeostasis through regulation of endocytic recycling of the transferrin receptor TFRC presumably by delivering the transferrin:transferrin receptor complex to recycling endosomes; the function may involve the CSC retromer subcomplex. In the case of Salmonella enterica infection plays arole in maturation of the Salmonella-containing vacuole (SCV) and promotes recruitment of LAMP1 to SCVs. This chain is Sorting nexin-3, found in Homo sapiens (Human).